A 101-amino-acid polypeptide reads, in one-letter code: Large ribosomal subunit protein uL24 (101 aa).

This sequence belongs to the universal ribosomal protein uL24 family. As to quaternary structure, part of the 50S ribosomal subunit.

One of two assembly initiator proteins, it binds directly to the 5'-end of the 23S rRNA, where it nucleates assembly of the 50S subunit. In terms of biological role, one of the proteins that surrounds the polypeptide exit tunnel on the outside of the subunit. The chain is Large ribosomal subunit protein uL24 from Borrelia garinii subsp. bavariensis (strain ATCC BAA-2496 / DSM 23469 / PBi) (Borreliella bavariensis).